Reading from the N-terminus, the 365-residue chain is uncharacterized protein (365 aa).

Disordered stretches follow at residues 119 to 157, 216 to 298, and 313 to 365; these read ERSR…QQES, RPPG…DISH, and SHHH…LSVG. Residues 326 to 340 are compositionally biased toward basic and acidic residues; that stretch reads SDPRIESRDLPERPQ.

This is an uncharacterized protein from Homo sapiens (Human).